We begin with the raw amino-acid sequence, 809 residues long: Pentatricopeptide repeat-containing protein At1g11290, chloroplastic (809 aa).

Residues 1 to 46 (MSSQLVQFSTVPQIPNPPSRHRHFLSERNYIPANVYEHPAALLLER) constitute a chloroplast transit peptide. PPR repeat units follow at residues 68 to 98 (EHFFQTKLVSLFCRYGSVDEAARVFEPIDSK), 99 to 133 (LNVLYHTMLKGFAKVSDLDKALQFFVRMRYDDVEP), 134 to 168 (VVYNFTYLLKVCGDEAELRVGKEIHGLLVKSGFSL), 169 to 199 (DLFAMTGLENMYAKCRQVNEARKVFDRMPER), 200 to 234 (DLVSWNTIVAGYSQNGMARMALEMVKSMCEENLKP), 235 to 269 (SFITIVSVLPAVSALRLISVGKEIHGYAMRSGFDS), 270 to 300 (LVNISTALVDMYAKCGSLETARQLFDGMLER), 301 to 335 (NVVSWNSMIDAYVQNENPKEAMLIFQKMLDEGVKP), 336 to 370 (TDVSVMGALHACADLGDLERGRFIHKLSVELGLDR), 371 to 401 (NVSVVNSLISMYCKCKEVDTAASMFGKLQSR), 402 to 436 (TLVSWNAMILGFAQNGRPIDALNYFSQMRSRTVKP), 437 to 471 (DTFTYVSVITAIAELSITHHAKWIHGVVMRSCLDK), 472 to 502 (NVFVTTALVDMYAKCGAIMIARLIFDMMSER), 503 to 537 (HVTTWNAMIDGYGTHGFGKAALELFEEMQKGTIKP), 538 to 568 (NGVTFLSVISACSHSGLVEAGLKCFYMMKEN), and 574 to 604 (SMDHYGAMVDLLGRAGRLNEAWDFIMQMPVK). Positions 609-684 (VYGAMLGACQ…TPGCSMVEIK (76 aa)) are type E motif. Residues 685-715 (NEVHSFFSGSTAHPDSKKIYAFLEKLICHIK) form a type E(+) motif region. Positions 716–809 (EAGYVPDTNL…NGACSCGDYW (94 aa)) are type DYW motif.

Belongs to the PPR family. PCMP-H subfamily.

It is found in the plastid. The protein localises to the chloroplast. Involved in multiple sites RNA editing events in chloroplasts. Involved in the editing of the site 7 of ndhB (ndhB-7) and site 5 of ndhD (ndhD-5) transcripts, which are two plastid-encoded subunits of the chloroplast NAD(P)H dehydrogenase (NDH) complex. Involved in the editing of the site 3 of rpoB (rpoB-3) transcript. Required for the activity of the NDH complex of the photosynthetic electron transport chain. Possesses low endoribonuclease activity in vitro. The sequence is that of Pentatricopeptide repeat-containing protein At1g11290, chloroplastic (PCMP-H40) from Arabidopsis thaliana (Mouse-ear cress).